Consider the following 802-residue polypeptide: MKKSIFKRYAAAVGLMASVLMFTAVPTTSNAADDQKTGKVGGFDWEMWNQNYTGTVSMNPGAGSFTCSWSGIENFLARMGKNYDDQKKNYKAFGDIVLTYDVEYTPRGNSYMCIYGWTRNPLMEYYIVEGWGDWEPPGNDGVDNFGTTTIDGKTYKIRKSMRYNQPSIEGTKTFPQYWSVRTTSGSRNNTTNYMKDQVSVTKHFDAWSKAGLDMSGTLYEVSLNIEGYRSNGSANVKSISFDGGIDIPDPEPIKPDENGYYLKENFESGEGNWSGRGSAKVKSSSGYDGTKGIFVSGREDTWNGASINLDELTFKAGETYSLGTAVMQDFESSVDFKLTLQYTDADGKENYDEVKTVTAAKGQWVDLSNSSYTIPSGATGLVLYVEVPESKTDFYMDGAYAGVKGTKPLISISSQSVDPPVTEPTNPTNPTGPSVTKWGDANCDGGVDLSDAIFIMQFLANPNKYGLTGTETNHMTNQGKVNGDVCEHGSGLTEDDAVSIQKYLIRAISELPESYLEGHDPSKTTTTTTRITTTTTTTTTTTTSKTTTTTTTTSPAMHGGYRDLGTPMNTSATMISDFRTGKAGDFFASDGWTNGKPFDCWWYKRNAVINDGCLQLSIDQKWTNDKNPDWDPRYSGGEFRTNNFYHYGYYECSMQAMKNDGVVSSFFTYTGPSDDNPWDEIDIEILGKNTTQVQFNYYTNGQGKHEKLYDLGFDSSEAYHTYGFDWQPNYIAWYVDGREVYRATQDIPKTPGKIMMNAWPGLTVDDWLKAFNGRTPLTAHYQWVTYNKNGVQHSSQGQNPWG.

An N-terminal signal peptide occupies residues 1–31 (MKKSIFKRYAAAVGLMASVLMFTAVPTTSNA). The GH11 domain maps to 32–239 (ADDQKTGKVG…SNGSANVKSI (208 aa)). Catalysis depends on Glu124, which acts as the Nucleophile. The active-site Proton donor is the Glu226. The tract at residues 245–523 (IDIPDPEPIK…SYLEGHDPSK (279 aa)) is b. The 147-residue stretch at 258–404 (NGYYLKENFE…YMDGAYAGVK (147 aa)) folds into the CBM-cenC domain. Disordered regions lie at residues 414–436 (SQSV…PSVT) and 533–564 (TTTT…YRDL). Low complexity-rich tracts occupy residues 419 to 436 (PPVT…PSVT) and 533 to 553 (TTTT…TTTT). The region spanning 434-513 (SVTKWGDANC…LIRAISELPE (80 aa)) is the Dockerin domain. The interval 524 to 555 (TTTTTTRITTTTTTTTTTTTSKTTTTTTTTSP) is linker. A GH16 domain is found at 556–792 (AMHGGYRDLG…WVTYNKNGVQ (237 aa)). Glu684 serves as the catalytic Nucleophile.

It in the N-terminal section; belongs to the glycosyl hydrolase 11 (cellulase G) family. In the C-terminal section; belongs to the glycosyl hydrolase 16 family.

It carries out the reaction Endohydrolysis of (1-&gt;4)-beta-D-xylosidic linkages in xylans.. The catalysed reaction is Hydrolysis of (1-&gt;4)-beta-D-glucosidic linkages in beta-D-glucans containing (1-&gt;3)- and (1-&gt;4)-bonds.. It functions in the pathway glycan degradation; xylan degradation. In terms of biological role, contains two catalytic domains with xylanase and endo-beta-1,3-1,4 glucanase activities. The protein is Xylanase/beta-glucanase (xynD) of Ruminococcus flavefaciens.